A 201-amino-acid chain; its full sequence is Large ribosomal subunit protein uL4 (201 aa).

The disordered stretch occupies residues Ala45–Gly66.

The protein belongs to the universal ribosomal protein uL4 family. In terms of assembly, part of the 50S ribosomal subunit.

Functionally, one of the primary rRNA binding proteins, this protein initially binds near the 5'-end of the 23S rRNA. It is important during the early stages of 50S assembly. It makes multiple contacts with different domains of the 23S rRNA in the assembled 50S subunit and ribosome. Its function is as follows. Forms part of the polypeptide exit tunnel. The sequence is that of Large ribosomal subunit protein uL4 from Aeromonas hydrophila subsp. hydrophila (strain ATCC 7966 / DSM 30187 / BCRC 13018 / CCUG 14551 / JCM 1027 / KCTC 2358 / NCIMB 9240 / NCTC 8049).